A 970-amino-acid polypeptide reads, in one-letter code: Type III restriction-modification enzyme EcoP15I Res subunit (970 aa).

The segment at 75–540 (AKSNIIDVSM…EVGRGLRLPV (466 aa)) is helicase-like domain. AMP is bound by residues threonine 91, glycine 122, phenylalanine 126, and aspartate 226. The interval 894–918 (TYSPDFAYVVKTAEGDYLNFIIETK) is endonuclease domain.

This sequence belongs to the type III restriction-modification system Res protein family. As to quaternary structure, a heterotetramer with stoichiometry Res(2)Mod(2). A heterotrimer with stoichiometry Res(1)Mod(2). The cofactor is Mg(2+). S-adenosyl-L-methionine serves as cofactor.

The enzyme catalyses Endonucleolytic cleavage of DNA to give specific double-stranded fragments with terminal 5'-phosphates.. In terms of biological role, a type III restriction enzyme that recognizes 2 inversely oriented double-stranded sequences 5'-CAGCAG-3' and cleaves DNA 25-27 base pairs downstream of one site. DNA restriction requires both the Res and Mod subunits. DNA topology affects its action; relaxed and negatively supercoiled DNA are digested but positively supercoiled DNA is not a good substrate. Interacts with DNA approximately one half-turn downstream of the recognition site. After binding to one recognition site undergoes random one-dimensional diffusion along DNA until it collides with a stationary enzyme bound to the second DNA site, which is when DNA cleavage occurs. The chain is Type III restriction-modification enzyme EcoP15I Res subunit from Escherichia coli.